Consider the following 1006-residue polypeptide: Unconventional myosin-Id (1006 aa).

Position 2 is an N-acetylalanine (Ala-2). The 687-residue stretch at 9–695 (FGKADFVLMD…TLFTLEELRA (687 aa)) folds into the Myosin motor domain. ATP is bound at residue 102–109 (GESGAGKT). Position 200 is a phosphoserine (Ser-200). Position 536 is a phosphotyrosine (Tyr-536). The tract at residues 572-594 (MIALVDNLASKEPYYVRCIKPND) is actin-binding. 2 IQ domains span residues 699–719 (IRIV…MRYK) and 721–741 (TKAA…SYIH). Residues 812-1005 (GQRADLGLQR…RSGFILSVPG (194 aa)) enclose the TH1 domain.

It belongs to the TRAFAC class myosin-kinesin ATPase superfamily. Myosin family. Interacts (via the two IQ motifs) with calmodulin. Binds an additional calmodulin chain via a third, C-terminal region. Interacts with F-actin. In terms of tissue distribution, expressed in many tissues. Highest levels in brain, followed by lung and ovary; expression is lowest in spleen.

Its subcellular location is the cytoplasm. It localises to the perikaryon. It is found in the cell projection. The protein resides in the dendrite. The protein localises to the early endosome. Its subcellular location is the cell cortex. In terms of biological role, unconventional myosin that functions as actin-based motor protein with ATPase activity. Plays a role in endosomal protein trafficking, and especially in the transfer of cargo proteins from early to recycling endosomes. Required for normal planar cell polarity in ciliated tracheal cells, for normal rotational polarity of cilia, and for coordinated, unidirectional ciliary movement in the trachea. Required for normal, polarized cilia organization in brain ependymal epithelial cells. The sequence is that of Unconventional myosin-Id (MYO1D) from Homo sapiens (Human).